Consider the following 152-residue polypeptide: MKEFTGKFNVQSAEIGIVVADFNETVTKQLVQGATEMLAKFDLENVDVYHVPGAFEIPFMTKQLLAKKEYDGILTLGAVIKGETDHYDLICQNVASGVMNLNLKSNIPITFGILTTDNIEQAMQRAGLKAGNEGAITAQSLLEMISLNRQIN.

5-amino-6-(D-ribitylamino)uracil-binding positions include F22, 54-56 (AFE), and 78-80 (AVI). Residue 83–84 (ET) participates in (2S)-2-hydroxy-3-oxobutyl phosphate binding. The active-site Proton donor is H86. Residue F111 coordinates 5-amino-6-(D-ribitylamino)uracil. Residue R125 coordinates (2S)-2-hydroxy-3-oxobutyl phosphate.

Belongs to the DMRL synthase family.

The catalysed reaction is (2S)-2-hydroxy-3-oxobutyl phosphate + 5-amino-6-(D-ribitylamino)uracil = 6,7-dimethyl-8-(1-D-ribityl)lumazine + phosphate + 2 H2O + H(+). It functions in the pathway cofactor biosynthesis; riboflavin biosynthesis; riboflavin from 2-hydroxy-3-oxobutyl phosphate and 5-amino-6-(D-ribitylamino)uracil: step 1/2. Its function is as follows. Catalyzes the formation of 6,7-dimethyl-8-ribityllumazine by condensation of 5-amino-6-(D-ribitylamino)uracil with 3,4-dihydroxy-2-butanone 4-phosphate. This is the penultimate step in the biosynthesis of riboflavin. This Limosilactobacillus reuteri (strain DSM 20016) (Lactobacillus reuteri) protein is 6,7-dimethyl-8-ribityllumazine synthase.